The following is a 313-amino-acid chain: Elongation factor Ts (313 aa).

The tract at residues 82-85 is involved in Mg(2+) ion dislocation from EF-Tu; the sequence is TDFV.

It belongs to the EF-Ts family.

The protein localises to the cytoplasm. Its function is as follows. Associates with the EF-Tu.GDP complex and induces the exchange of GDP to GTP. It remains bound to the aminoacyl-tRNA.EF-Tu.GTP complex up to the GTP hydrolysis stage on the ribosome. This Nostoc sp. (strain PCC 7120 / SAG 25.82 / UTEX 2576) protein is Elongation factor Ts.